Reading from the N-terminus, the 362-residue chain is Mannose-1-phosphate guanyltransferase (362 aa).

This sequence belongs to the transferase hexapeptide repeat family.

It is found in the cytoplasm. It catalyses the reaction alpha-D-mannose 1-phosphate + GTP + H(+) = GDP-alpha-D-mannose + diphosphate. The protein operates within nucleotide-sugar biosynthesis; GDP-alpha-D-mannose biosynthesis; GDP-alpha-D-mannose from alpha-D-mannose 1-phosphate (GTP route): step 1/1. In terms of biological role, involved in cell wall synthesis where it is required for glycosylation. Involved in cell cycle progression through cell-size checkpoint. The sequence is that of Mannose-1-phosphate guanyltransferase (MPG1) from Debaryomyces hansenii (strain ATCC 36239 / CBS 767 / BCRC 21394 / JCM 1990 / NBRC 0083 / IGC 2968) (Yeast).